We begin with the raw amino-acid sequence, 1282 residues long: Ribosome biogenesis protein BMS1 homolog (1282 aa).

Residues 1-24 (MEAKDQKKHRKKNSGPKAAKKKKR) are compositionally biased toward basic residues. The interval 1–43 (MEAKDQKKHRKKNSGPKAAKKKKRLLQDLQLGDEEDARKRNPK) is disordered. Lys-43 is covalently cross-linked (Glycyl lysine isopeptide (Lys-Gly) (interchain with G-Cter in SUMO2)). The 166-residue stretch at 80–245 (PPPIVVVVMG…GRFITVMKFR (166 aa)) folds into the Bms1-type G domain. The segment at 89-96 (GPPKVGKS) is G1. 89–96 (GPPKVGKS) contacts ATP. The segment at 117-121 (PVTIV) is G2. Residues 132–135 (ECGC) are G3. A G4 region spans residues 184-187 (THLD). Ser-188 bears the Phosphoserine mark. The segment at 219-228 (LSGMVHGEYQ) is G5. Disordered regions lie at residues 397–557 (DSKP…ANCQ) and 575–667 (PTFD…ALKW). Residues Lys-399 and Lys-415 each participate in a glycyl lysine isopeptide (Lys-Gly) (interchain with G-Cter in SUMO2) cross-link. Acidic residues-rich tracts occupy residues 434–472 (GDEDESGDSDDEEDDEMSEDDGLENGSSDEEAEEEENAE) and 503–531 (DSDDDLERSSAEEGEAEEADESSEEEDCT). Residues 535-550 (KGISGSKAAGEGSKAG) show a composition bias toward low complexity. At Ser-552 the chain carries Phosphoserine. Residues 588–610 (FASEDESEESSSLSAEEEDSENE) are compositionally biased toward acidic residues. Phosphoserine is present on residues Ser-625 and Ser-639. Lys-646 is covalently cross-linked (Glycyl lysine isopeptide (Lys-Gly) (interchain with G-Cter in SUMO2)). Residues 653 to 667 (EENNDSKETSGALKW) are compositionally biased toward basic and acidic residues. Thr-708 is modified (phosphothreonine). Disordered stretches follow at residues 787-822 (ETGDVHKGKSGPNTQNEDIEKEVKEEIDPDEEESAK) and 1178-1202 (NKPKTQAKAGKVPKDRRRPAVIREP). Residue Lys-810 forms a Glycyl lysine isopeptide (Lys-Gly) (interchain with G-Cter in SUMO1); alternate linkage. Lys-810 is covalently cross-linked (Glycyl lysine isopeptide (Lys-Gly) (interchain with G-Cter in SUMO2); alternate). Residue Lys-1206 forms a Glycyl lysine isopeptide (Lys-Gly) (interchain with G-Cter in SUMO2) linkage. Residues 1219–1282 (SQKMKKAKEQ…SLKGAEGQLQ (64 aa)) form a disordered region. Over residues 1228–1248 (QRHLHNKEHFRAKQKEEEEKL) the composition is skewed to basic and acidic residues. Positions 1249–1259 (KRQKDLRKKLF) are enriched in basic residues.

Belongs to the TRAFAC class translation factor GTPase superfamily. Bms1-like GTPase family. BMS1 subfamily. In terms of assembly, part of the small subunit (SSU) processome, composed of more than 70 proteins and the RNA chaperone small nucleolar RNA (snoRNA) U3. Interacts with RCL1.

The protein localises to the nucleus. Its subcellular location is the nucleolus. It carries out the reaction GTP + H2O = GDP + phosphate + H(+). GTPase required for the synthesis of 40S ribosomal subunits and for processing of pre-ribosomal RNA (pre-rRNA) at sites A0, A1, and A2. Controls access of pre-rRNA intermediates to RCL1 during ribosome biogenesis by binding RCL1 in a GTP-dependent manner, and delivering it to pre-ribosomes. GTP-binding and/or GTP hydrolysis may induce conformational rearrangements within the BMS1-RCL1 complex allowing the interaction of RCL1 with its RNA substrate. Required for RCL1 import into the nucleus. This Homo sapiens (Human) protein is Ribosome biogenesis protein BMS1 homolog.